We begin with the raw amino-acid sequence, 428 residues long: Trigger factor (428 aa).

One can recognise a PPIase FKBP-type domain in the interval 163–248 (GDTAIIDFEG…INDVKVKELS (86 aa)).

It belongs to the FKBP-type PPIase family. Tig subfamily.

Its subcellular location is the cytoplasm. The enzyme catalyses [protein]-peptidylproline (omega=180) = [protein]-peptidylproline (omega=0). Functionally, involved in protein export. Acts as a chaperone by maintaining the newly synthesized protein in an open conformation. Functions as a peptidyl-prolyl cis-trans isomerase. The chain is Trigger factor from Clostridioides difficile (strain 630) (Peptoclostridium difficile).